Here is a 122-residue protein sequence, read N- to C-terminus: Ribosome-binding factor A (122 aa).

Belongs to the RbfA family. In terms of assembly, monomer. Binds 30S ribosomal subunits, but not 50S ribosomal subunits or 70S ribosomes.

The protein localises to the cytoplasm. One of several proteins that assist in the late maturation steps of the functional core of the 30S ribosomal subunit. Associates with free 30S ribosomal subunits (but not with 30S subunits that are part of 70S ribosomes or polysomes). Required for efficient processing of 16S rRNA. May interact with the 5'-terminal helix region of 16S rRNA. This is Ribosome-binding factor A from Syntrophomonas wolfei subsp. wolfei (strain DSM 2245B / Goettingen).